Consider the following 351-residue polypeptide: Peptide chain release factor 1 (351 aa).

Q229 bears the N5-methylglutamine mark.

It belongs to the prokaryotic/mitochondrial release factor family. Post-translationally, methylated by PrmC. Methylation increases the termination efficiency of RF1.

The protein localises to the cytoplasm. Functionally, peptide chain release factor 1 directs the termination of translation in response to the peptide chain termination codons UAG and UAA. This chain is Peptide chain release factor 1, found in Cereibacter sphaeroides (strain ATCC 17023 / DSM 158 / JCM 6121 / CCUG 31486 / LMG 2827 / NBRC 12203 / NCIMB 8253 / ATH 2.4.1.) (Rhodobacter sphaeroides).